Reading from the N-terminus, the 591-residue chain is Laccase (591 aa).

Residues Met1 to Ala20 form the signal peptide. 2 consecutive Plastocyanin-like domains span residues Val66 to Asp189 and Ile198 to Asn356. N-linked (GlcNAc...) asparagine glycosylation occurs at Asn121. Residues His126, His128, His171, and His173 each contribute to the Cu cation site. 2 disulfides stabilise this stretch: Cys147/Cys571 and Cys332/Cys366. N-linked (GlcNAc...) asparagine glycosylation is found at Asn234, Asn242, Asn265, and Asn323. Residues Asn407 and Asn425 are each glycosylated (N-linked (GlcNAc...) asparagine). In terms of domain architecture, Plastocyanin-like 3 spans Gly416 to Gln551. Cu cation-binding residues include His463, His466, His468, His533, Cys534, His535, and His539.

It belongs to the multicopper oxidase family. Cu cation is required as a cofactor.

It localises to the secreted. The enzyme catalyses 4 hydroquinone + O2 = 4 benzosemiquinone + 2 H2O. Its function is as follows. Lignin degradation and detoxification of lignin-derived products. This is Laccase (LAC-1) from Cryphonectria parasitica (Chestnut blight fungus).